We begin with the raw amino-acid sequence, 262 residues long: uncharacterized protein (262 aa).

Residues His-7, His-9, Glu-96, His-132, His-156, and Asp-211 each contribute to the a divalent metal cation site.

It belongs to the metallo-dependent hydrolases superfamily. TatD-type hydrolase family. The cofactor is a divalent metal cation.

This is an uncharacterized protein from Mycoplasma genitalium (strain ATCC 33530 / DSM 19775 / NCTC 10195 / G37) (Mycoplasmoides genitalium).